The chain runs to 134 residues: Rhoptry antigen protein (134 aa).

Disordered stretches follow at residues 21–82 (MGPL…SNLK) and 96–134 (QLDK…ENEL). Positions 29 to 38 (KSTSAASTSD) are enriched in polar residues. Residues 39 to 54 (ELSGSEGPSTESTSTG) show a composition bias toward low complexity. Over residues 57–69 (GEDKTTDNTYKEM) the composition is skewed to basic and acidic residues. Residues 102–113 (PKKKKSKRKKKR) show a composition bias toward basic residues. The segment covering 114–126 (DSSSDRILLEESK) has biased composition (basic and acidic residues).

The sequence is that of Rhoptry antigen protein from Plasmodium falciparum.